The primary structure comprises 177 residues: uncharacterized protein (177 aa).

2 stretches are compositionally biased toward low complexity: residues 78–93 (NNNNNNNNTINNNTNN) and 120–130 (SDVNSNNNNGN). The tract at residues 78-146 (NNNNNNNNTI…NKKLKKDGTN (69 aa)) is disordered. Basic residues predominate over residues 131–146 (HQKKKINKKLKKDGTN).

This is an uncharacterized protein from Dictyostelium discoideum (Social amoeba).